A 271-amino-acid polypeptide reads, in one-letter code: Acetylglutamate kinase (271 aa).

Substrate-binding positions include 41–42 (GG), arginine 63, and asparagine 166.

This sequence belongs to the acetylglutamate kinase family. ArgB subfamily.

It is found in the cytoplasm. The enzyme catalyses N-acetyl-L-glutamate + ATP = N-acetyl-L-glutamyl 5-phosphate + ADP. The protein operates within amino-acid biosynthesis; L-arginine biosynthesis; N(2)-acetyl-L-ornithine from L-glutamate: step 2/4. Functionally, catalyzes the ATP-dependent phosphorylation of N-acetyl-L-glutamate. This Anaeromyxobacter sp. (strain Fw109-5) protein is Acetylglutamate kinase.